A 358-amino-acid polypeptide reads, in one-letter code: 3-O-methylredipecamine 2-O-methyltransferase IpeOMT3 (358 aa).

Residues G193, D216, D236, M237, and K250 each contribute to the S-adenosyl-L-methionine site. H254 functions as the Proton acceptor in the catalytic mechanism.

This sequence belongs to the class I-like SAM-binding methyltransferase superfamily. Cation-independent O-methyltransferase family. Expressed in roots.

Its subcellular location is the cytoplasm. The protein resides in the cytosol. The enzyme catalyses (S)-reticuline + S-adenosyl-L-methionine = (S)-laudanine + S-adenosyl-L-homocysteine + H(+). It functions in the pathway alkaloid biosynthesis. Functionally, O-methyltransferase involved in the biosynthesis of ipecac and benzylisoquinoline monoterpenoid-isoquinoline alkaloids natural products, starting by the condensation of dopamine and secologanin, and including emetine and cephaeline, drugs used both as anti-protozoal (e.g. treatment of ameobiasis) and as emetic agents. Catalyzes 2-O-methylation of 3-O-methylredipecamine and, with less efficiency, the 7-O-methylation of (S)-coclaurine, (R,S)-N-methylcoclaurine, (R,S)-4'-O-methylcoclaurine, (R,S)-6-O-methyllaudanosoline, nororientaline, (S)-norreticuline and (S)-reticuline. The sequence is that of 3-O-methylredipecamine 2-O-methyltransferase IpeOMT3 from Carapichea ipecacuanha (Ipecac).